Reading from the N-terminus, the 315-residue chain is ADP/ATP translocase (315 aa).

The Mitochondrial intermembrane portion of the chain corresponds to 1–13; it reads MSNKQETKILGMP. 2 Solcar repeats span residues 13–106 and 118–210; these read PPFV…FKAM and KWMA…IKPV. Residues 14–37 form a helical membrane-spanning segment; it reads PFVVDFLMGGVSAAVSKTAAAPIE. Lysine 30 provides a ligand contact to bongkrekate. The Mitochondrial matrix portion of the chain corresponds to 38–80; that stretch reads RIKLLVQNQDEMIKAGRLDRRYNGIIDCFRRTTADEGLMALWR. Residues isoleucine 62 and 81-83 contribute to the a cardiolipin site; that span reads GNT. A helical membrane pass occupies residues 81–104; sequence GNTANVIRYFPTQALNFAFRDKFK. An ADP-binding site is contributed by arginine 88. Bongkrekate contacts are provided by residues 88 to 89 and asparagine 96; that span reads RY. The Mitochondrial intermembrane segment spans residues 105–115; sequence AMFGYKKDKDG. Residues 116-145 form a helical membrane-spanning segment; it reads YAKWMAGNLASGGAAGATSLLFVYSLDYAR. Topologically, residues 146 to 184 are mitochondrial matrix; the sequence is TRLANDAKSAKGGGARQFNGLIDVYRKTLASDGIAGLYR. Residues leucine 166 and 184 to 185 contribute to the a cardiolipin site; that span reads RG. Residues 185–213 traverse the membrane as a helical segment; the sequence is GFGPSVAGIVVYRGLYFGMYDSIKPVVLV. Position 196-197 (196-197) interacts with bongkrekate; sequence YR. At 214-216 the chain is on the mitochondrial intermembrane side; it reads GPL. Residues 217 to 242 form a helical membrane-spanning segment; the sequence is ANNFLASFLLGWCVTTGAGIASYPLD. The stretch at 218–304 is one Solcar repeat; that stretch reads NNFLASFLLG…LSIYDQLQIL (87 aa). Residues 243–283 are Mitochondrial matrix-facing; sequence TVRRRMMMTSGEAVKYKSSIDAFRQIIAKEGVKSLFKGAGA. Arginine 245 is an ADP binding site. The Nucleotide carrier signature motif signature appears at 245 to 250; that stretch reads RRRMMM. A cardiolipin is bound by residues 260–261 and 280–282; these read SS and GAG. A helical transmembrane segment spans residues 284 to 304; it reads NILRGVAGAGVLSIYDQLQIL. Residues 305 to 315 lie on the Mitochondrial intermembrane side of the membrane; it reads LFGKAFKGGSG.

This sequence belongs to the mitochondrial carrier (TC 2.A.29) family. In terms of assembly, monomer.

The protein localises to the mitochondrion inner membrane. The catalysed reaction is ADP(in) + ATP(out) = ADP(out) + ATP(in). Its activity is regulated as follows. The matrix-open state (m-state) is inhibited by the membrane-permeable bongkrekic acid (BKA). The cytoplasmic-open state (c-state) is inhibited by the membrane-impermeable toxic inhibitor carboxyatractyloside (CATR). In terms of biological role, ADP:ATP antiporter that mediates import of ADP into the mitochondrial matrix for ATP synthesis, and export of ATP out to fuel the cell. Cycles between the cytoplasmic-open state (c-state) and the matrix-open state (m-state): operates by the alternating access mechanism with a single substrate-binding site intermittently exposed to either the cytosolic (c-state) or matrix (m-state) side of the inner mitochondrial membrane. This Thermothelomyces thermophilus (strain ATCC 42464 / BCRC 31852 / DSM 1799) (Sporotrichum thermophile) protein is ADP/ATP translocase.